We begin with the raw amino-acid sequence, 496 residues long: E3 ubiquitin-protein ligase XIAP (496 aa).

BIR repeat units lie at residues 26-93 (EFNR…CRFI), 163-230 (EEAR…CFFV), and 264-329 (YDAR…CKYL). The Zn(2+) site is built by C299, C302, and H319. K321 participates in a covalent cross-link: Glycyl lysine isopeptide (Lys-Gly) (interchain with G-Cter in ubiquitin). C326 provides a ligand contact to Zn(2+). K327 is covalently cross-linked (Glycyl lysine isopeptide (Lys-Gly) (interchain with G-Cter in ubiquitin)). At C449 the chain carries S-nitrosocysteine. Residues 449–484 (CKICMDRNIAIVFVPCGHLVTCKQCAEAVDKCPMCC) form an RING-type zinc finger.

It belongs to the IAP family. In terms of assembly, monomer, and homodimer. Interacts (via BIR3 domain) with DIABLO/SMAC; the interaction inhibits apoptotic suppressor activity. Interacts with HTRA2/PRSS25; the interaction inhibits apoptotic suppressor activity. Interacts with TAB1/MAP3K7IP1 and AIFM1. Interaction with DIABLO/SMAC hinders binding of TAB1/MAP3K7IP1 and AIFM1. Interacts with TCF25 and COMMD1. Interacts (via BIR3 domain) with SEPTIN4. Interacts with RIP1, RIP2, RIP3, RIP4, CCS and USP19. Interacts (via BIR 2 domain and BIR 3 domain) with HAX1 (via C-terminus) and this interaction blocks ubiquitination of XIAP/BIRC4. Interacts with the monomeric form of BIRC5/survivin. Interacts with TLE3 and TCF7L2/TCF4. Interacts (via BIR 3 and RING domains) with PDCL3. In terms of processing, S-Nitrosylation down-regulates its E3 ubiquitin-protein ligase activity. Autoubiquitinated. Ubiquitinated by TRIM32; leading to proteasomal degradation.

It is found in the cytoplasm. The protein localises to the nucleus. The enzyme catalyses S-ubiquitinyl-[E2 ubiquitin-conjugating enzyme]-L-cysteine + [acceptor protein]-L-lysine = [E2 ubiquitin-conjugating enzyme]-L-cysteine + N(6)-ubiquitinyl-[acceptor protein]-L-lysine.. Its function is as follows. Multi-functional protein which regulates not only caspases and apoptosis, but also modulates inflammatory signaling and immunity, copper homeostasis, mitogenic kinase signaling, cell proliferation, as well as cell invasion and metastasis. Acts as a direct caspase inhibitor. Directly bind to the active site pocket of CASP3 and CASP7 and obstructs substrate entry. Inactivates CASP9 by keeping it in a monomeric, inactive state. Acts as an E3 ubiquitin-protein ligase regulating NF-kappa-B signaling and the target proteins for its E3 ubiquitin-protein ligase activity include: RIPK1, RIPK2, MAP3K2/MEKK2, DIABLO/SMAC, AIFM1, CCS, PTEN and BIRC5/survivin. Acts as an important regulator of innate immunity by mediating 'Lys-63'-linked polyubiquitination of RIPK2 downstream of NOD1 and NOD2, thereby transforming RIPK2 into a scaffolding protein for downstream effectors, ultimately leading to activation of the NF-kappa-B and MAP kinases signaling. 'Lys-63'-linked polyubiquitination of RIPK2 also promotes recruitment of the LUBAC complex to RIPK2. Regulates the BMP signaling pathway and the SMAD and MAP3K7/TAK1 dependent pathways leading to NF-kappa-B and JNK activation. Ubiquitination of CCS leads to enhancement of its chaperone activity toward its physiologic target, SOD1, rather than proteasomal degradation. Ubiquitination of MAP3K2/MEKK2 and AIFM1 does not lead to proteasomal degradation. Plays a role in copper homeostasis by ubiquitinating COMMD1 and promoting its proteasomal degradation. Can also function as E3 ubiquitin-protein ligase of the NEDD8 conjugation pathway, targeting effector caspases for neddylation and inactivation. Ubiquitinates and therefore mediates the proteasomal degradation of BCL2 in response to apoptosis. Protects cells from spontaneous formation of the ripoptosome, a large multi-protein complex that has the capability to kill cancer cells in a caspase-dependent and caspase-independent manner. Suppresses ripoptosome formation by ubiquitinating RIPK1 and CASP8. Acts as a positive regulator of Wnt signaling and ubiquitinates TLE1, TLE2, TLE3, TLE4 and AES. Ubiquitination of TLE3 results in inhibition of its interaction with TCF7L2/TCF4 thereby allowing efficient recruitment and binding of the transcriptional coactivator beta-catenin to TCF7L2/TCF4 that is required to initiate a Wnt-specific transcriptional program. The sequence is that of E3 ubiquitin-protein ligase XIAP (Xiap) from Rattus norvegicus (Rat).